The sequence spans 736 residues: Meiotic expression up-regulated protein 27 (736 aa).

Belongs to the UPF0300 family.

This Schizosaccharomyces pombe (strain 972 / ATCC 24843) (Fission yeast) protein is Meiotic expression up-regulated protein 27 (meu27).